The following is a 489-amino-acid chain: Beta-galactosidase (489 aa).

Lys116 bears the N6-methyllysine; partial mark. Lys135 carries the N6-methyllysine modification. Glu206 acts as the Proton donor in catalysis. N6-methyllysine; partial occurs at positions 273 and 311. Residue Lys332 is modified to N6-methyllysine. Glu387 (nucleophile) is an active-site residue.

Homotetramer.

The enzyme catalyses Hydrolysis of terminal non-reducing beta-D-galactose residues in beta-D-galactosides.. This is Beta-galactosidase (lacS) from Saccharolobus solfataricus (strain ATCC 35092 / DSM 1617 / JCM 11322 / P2) (Sulfolobus solfataricus).